Reading from the N-terminus, the 728-residue chain is Polyribonucleotide nucleotidyltransferase (728 aa).

Mg(2+) is bound by residues aspartate 488 and aspartate 494. The KH domain occupies 555–614; it reads PRMITMKIHPDKIREVIGKGGSTIQALTKETGTTIDIQEDGTITIASTSTDGMAEAKRRI. The S1 motif domain maps to 624–692; sequence GKIYNGTVLK…EKGRLRLSLK (69 aa). The interval 702–728 is disordered; the sequence is ISPVNAGEAAPAPAPAAAPATPSDQQQ. Low complexity predominate over residues 710–721; sequence AAPAPAPAAAPA.

It belongs to the polyribonucleotide nucleotidyltransferase family. Mg(2+) serves as cofactor.

It localises to the cytoplasm. The enzyme catalyses RNA(n+1) + phosphate = RNA(n) + a ribonucleoside 5'-diphosphate. In terms of biological role, involved in mRNA degradation. Catalyzes the phosphorolysis of single-stranded polyribonucleotides processively in the 3'- to 5'-direction. This Cupriavidus pinatubonensis (strain JMP 134 / LMG 1197) (Cupriavidus necator (strain JMP 134)) protein is Polyribonucleotide nucleotidyltransferase.